A 492-amino-acid polypeptide reads, in one-letter code: Glutamyl-tRNA(Gln) amidotransferase subunit A (492 aa).

Active-site charge relay system residues include lysine 79 and serine 154. The active-site Acyl-ester intermediate is serine 178.

This sequence belongs to the amidase family. GatA subfamily. As to quaternary structure, heterotrimer of A, B and C subunits.

The catalysed reaction is L-glutamyl-tRNA(Gln) + L-glutamine + ATP + H2O = L-glutaminyl-tRNA(Gln) + L-glutamate + ADP + phosphate + H(+). Allows the formation of correctly charged Gln-tRNA(Gln) through the transamidation of misacylated Glu-tRNA(Gln) in organisms which lack glutaminyl-tRNA synthetase. The reaction takes place in the presence of glutamine and ATP through an activated gamma-phospho-Glu-tRNA(Gln). In Acinetobacter baylyi (strain ATCC 33305 / BD413 / ADP1), this protein is Glutamyl-tRNA(Gln) amidotransferase subunit A.